The primary structure comprises 469 residues: 3-isopropylmalate dehydratase large subunit (469 aa).

Residues cysteine 350, cysteine 410, and cysteine 413 each contribute to the [4Fe-4S] cluster site.

Belongs to the aconitase/IPM isomerase family. LeuC type 1 subfamily. In terms of assembly, heterodimer of LeuC and LeuD. [4Fe-4S] cluster serves as cofactor.

It catalyses the reaction (2R,3S)-3-isopropylmalate = (2S)-2-isopropylmalate. The protein operates within amino-acid biosynthesis; L-leucine biosynthesis; L-leucine from 3-methyl-2-oxobutanoate: step 2/4. Its function is as follows. Catalyzes the isomerization between 2-isopropylmalate and 3-isopropylmalate, via the formation of 2-isopropylmaleate. This Brucella anthropi (strain ATCC 49188 / DSM 6882 / CCUG 24695 / JCM 21032 / LMG 3331 / NBRC 15819 / NCTC 12168 / Alc 37) (Ochrobactrum anthropi) protein is 3-isopropylmalate dehydratase large subunit.